The following is a 490-amino-acid chain: Trigger factor (490 aa).

The 87-residue stretch at 161 to 247 (GDQVIVDIEA…VHEVKEAELP (87 aa)) folds into the PPIase FKBP-type domain. Low complexity predominate over residues 441 to 460 (AEPAEGTEPAAEEAVTAPEV). Residues 441–490 (AEPAEGTEPAAEEAVTAPEVVDGETTPASESAESLAVTETGSRADDDQAS) form a disordered region. Over residues 466 to 481 (TPASESAESLAVTETG) the composition is skewed to polar residues.

The protein belongs to the FKBP-type PPIase family. Tig subfamily.

The protein localises to the cytoplasm. The enzyme catalyses [protein]-peptidylproline (omega=180) = [protein]-peptidylproline (omega=0). Functionally, involved in protein export. Acts as a chaperone by maintaining the newly synthesized protein in an open conformation. Functions as a peptidyl-prolyl cis-trans isomerase. This Thermomicrobium roseum (strain ATCC 27502 / DSM 5159 / P-2) protein is Trigger factor.